A 591-amino-acid chain; its full sequence is MKKYPKIGIRPTIDGRQGGVRESLEEKTMNLAKAVAELISNNLKNGDGSPVECIIADNTIGRVAESAACAEKFEREGVGSTITVTSCWCYGAETMDMNPHYPKAVWGFNGTERPGAVYLAAVLAGHAQKGLPAFGIYGRDVQDLDDNTIPEDVAEKILRFARAAQAVATMRGKSYLSMGSVSMGIAGSIVNPDFFQEYLGMRNESIDLTEIIRRMEEGIYDHEEYAKAMAWTEKYCKVNEGEDFKNRPEKRKKREQKDADWEFVVKMMIIMRDLMTGNPKLKEMGFKEEALGHNAIAAGFQGQRQWTDFYPNGDYPEALLNTSFDWNGIREAFVVATENDACNGVAMLFGHLLTNRAQIFSDVRTYWSPEAVKRVTGKELTGLAANGIIHLINSGATTLDGSGQSLDAEGNPVMKEPWNLTDADVENCLKATTWYPADRDYFRGGGFSSNFLSKGGMPVTMMRLNLIKGLGPVLQIAEGWTVEIDPEIHQKLNMRTDPTWPTTWFVPRLCDKSAFKDVYSVMNNWGANHGAISYGHIGQDLITLASMLRIPVCMHNVDENEIFRPTAWNAFGMDKEGADYRACTTYGPIYK.

Residues E338 and D362 each act as proton acceptor in the active site. Residues E338, D362, and H529 each coordinate Mn(2+).

This sequence belongs to the L-fucose isomerase family. It depends on Mn(2+) as a cofactor.

The protein resides in the cytoplasm. The enzyme catalyses L-fucose = L-fuculose. It participates in carbohydrate degradation; L-fucose degradation; L-lactaldehyde and glycerone phosphate from L-fucose: step 1/3. Converts the aldose L-fucose into the corresponding ketose L-fuculose. This is L-fucose isomerase from Bacteroides thetaiotaomicron (strain ATCC 29148 / DSM 2079 / JCM 5827 / CCUG 10774 / NCTC 10582 / VPI-5482 / E50).